Reading from the N-terminus, the 191-residue chain is Xanthine phosphoribosyltransferase (191 aa).

2 residues coordinate xanthine: Leu20 and Asn27. A 5-phospho-alpha-D-ribose 1-diphosphate-binding site is contributed by 128–132 (ANGQA). Lys156 contributes to the xanthine binding site.

Belongs to the purine/pyrimidine phosphoribosyltransferase family. Xpt subfamily. Homodimer.

The protein localises to the cytoplasm. It carries out the reaction XMP + diphosphate = xanthine + 5-phospho-alpha-D-ribose 1-diphosphate. It participates in purine metabolism; XMP biosynthesis via salvage pathway; XMP from xanthine: step 1/1. Converts the preformed base xanthine, a product of nucleic acid breakdown, to xanthosine 5'-monophosphate (XMP), so it can be reused for RNA or DNA synthesis. The protein is Xanthine phosphoribosyltransferase of Acinetobacter baylyi (strain ATCC 33305 / BD413 / ADP1).